The sequence spans 182 residues: Adenine phosphoribosyltransferase (182 aa).

This sequence belongs to the purine/pyrimidine phosphoribosyltransferase family. Homodimer.

It localises to the cytoplasm. It carries out the reaction AMP + diphosphate = 5-phospho-alpha-D-ribose 1-diphosphate + adenine. Its pathway is purine metabolism; AMP biosynthesis via salvage pathway; AMP from adenine: step 1/1. Functionally, catalyzes a salvage reaction resulting in the formation of AMP, that is energically less costly than de novo synthesis. This is Adenine phosphoribosyltransferase from Stutzerimonas stutzeri (Pseudomonas stutzeri).